A 176-amino-acid chain; its full sequence is Tumor necrosis factor receptor superfamily member 23 (176 aa).

The first 29 residues, 1–29, serve as a signal peptide directing secretion; that stretch reads MVTFSHVSSLSHWFLLLLLLNLFLPVIFA. 3 TNFR-Cys repeats span residues 37 to 72, 74 to 114, and 115 to 155; these read NCPDGEYQSNDVCCKTCPSGTFVKAPCKIPHTQGQC, KCHP…DRKC, and ECQI…NTVC. 9 disulfides stabilise this stretch: Cys-38–Cys-49, Cys-50–Cys-63, Cys-53–Cys-72, Cys-75–Cys-90, Cys-93–Cys-106, Cys-96–Cys-114, Cys-116–Cys-131, Cys-134–Cys-147, and Cys-137–Cys-155. Asn-148 carries an N-linked (GlcNAc...) asparagine glycan. Residue Cys-155 is the site of GPI-anchor amidated cysteine attachment. A propeptide spans 156–176 (removed in mature form); the sequence is SSSVSNPRNWLFLLMLIVFCI.

As to expression, ubiquitous.

The protein localises to the cell membrane. In terms of biological role, receptor for the cytotoxic ligand TRAIL. Lacks a cytoplasmic death domain and hence is not capable of inducing apoptosis. May protect cells against TRAIL mediated apoptosis through ligand competition. Cannot induce the NF-kappa-B pathway. This Mus musculus (Mouse) protein is Tumor necrosis factor receptor superfamily member 23 (Tnfrsf23).